Here is a 320-residue protein sequence, read N- to C-terminus: Aristolochene synthase (320 aa).

The segment covering 1 to 14 has biased composition (polar residues); the sequence is MKKPNGTNGASSSL. The disordered stretch occupies residues 1–20; that stretch reads MKKPNGTNGASSSLEPPPST. The Mg(2+) site is built by Asp-90, Asn-219, Ser-223, and Glu-227. The (2E,6E)-farnesyl diphosphate site is built by Arg-314 and Tyr-315.

The protein belongs to the terpene synthase family. As to quaternary structure, homodimer. Mg(2+) serves as cofactor.

It catalyses the reaction (2E,6E)-farnesyl diphosphate = (+)-aristolochene + diphosphate. It functions in the pathway sesquiterpene biosynthesis; aristolochene biosynthesis; aristolochene from farnesyl diphosphate: step 1/1. In terms of biological role, catalyzes the cyclization of trans,trans-farnesyl diphosphate (FPP) to the bicyclic sesquiterpene aristolochene. Produces germacrene A as an enzyme-bound intermediate that is not released by the enzyme, but is further cyclized to produce aristolochene. Aristolochene is the likely parent compound for a number of sesquiterpenoid toxins produced by filamentous fungi. The chain is Aristolochene synthase (Ari1) from Aspergillus terreus.